A 247-amino-acid chain; its full sequence is E3 ubiquitin ligase TRIM40 (247 aa).

The RING-type zinc-finger motif lies at 12-55 (CPICLDPLKEAVSTDCRHLFCRMCLIRHMDKASVSGVLSCPVCR). A B box-type zinc finger spans residues 64–105 (GDNYICHTHQKRVCRFCESSRHLLCEECLQSPEHRAHTELSI). 4 residues coordinate Zn(2+): cysteine 69, histidine 72, cysteine 91, and histidine 97. Positions 111-148 (HYKERLNRRSRKLRKDLGDLQRLKAQEEKMLQALQVDW) form a coiled coil.

The protein belongs to the TRIM/RBCC family. As to quaternary structure, interacts with NEDD8.

It catalyses the reaction S-ubiquitinyl-[E2 ubiquitin-conjugating enzyme]-L-cysteine + [acceptor protein]-L-lysine = [E2 ubiquitin-conjugating enzyme]-L-cysteine + N(6)-ubiquitinyl-[acceptor protein]-L-lysine.. Functionally, E3 ubiquitin-protein ligase that plays a role in the limitation of the innate immune response. Mediates inhibition of the RLR signaling pathway by ubiquitinating RIGI and IFIH1 receptors, leading to their proteasomal degradation. Also promotes the neddylation of IKBKG/NEMO, stabilizing NFKBIA, and thereby inhibiting of NF-kappa-B nuclear translocation and activation. The protein is E3 ubiquitin ligase TRIM40 (Trim40) of Rattus norvegicus (Rat).